The chain runs to 288 residues: Homoserine kinase (288 aa).

78-88 lines the ATP pocket; sequence PLARGLGSSSS.

This sequence belongs to the GHMP kinase family. Homoserine kinase subfamily.

Its subcellular location is the cytoplasm. It carries out the reaction L-homoserine + ATP = O-phospho-L-homoserine + ADP + H(+). It participates in amino-acid biosynthesis; L-threonine biosynthesis; L-threonine from L-aspartate: step 4/5. In terms of biological role, catalyzes the ATP-dependent phosphorylation of L-homoserine to L-homoserine phosphate. This chain is Homoserine kinase, found in Streptococcus agalactiae serotype III (strain NEM316).